A 358-amino-acid polypeptide reads, in one-letter code: CCAAT/enhancer-binding protein alpha (358 aa).

The segment at 1-55 (MESADFYEAEPRPPMSSHLQSPPHAPSSAAFGFPRGAGPAQPPAPPAAPEPLGGI) is disordered. The required to repress E2F1:TFDP1-mediated transcription, to inhibit cell cycle and to induce adipocyte differentiation stretch occupies residues 1–70 (MESADFYEAE…SIDISAYIDP (70 aa)). The segment covering 29 to 39 (AAFGFPRGAGP) has biased composition (low complexity). Positions 40 to 49 (AQPPAPPAAP) are enriched in pro residues. A required for interaction with TRIB1 region spans residues 54-72 (GICEHETSIDISAYIDPAA). The interval 128–204 (PPGYGCAAAG…HPPPAHLAAP (77 aa)) is required to induce adipocyte differentiation. The residue at position 161 (Lys-161) is an N6-acetyllysine; alternate. Lys-161 is covalently cross-linked (Glycyl lysine isopeptide (Lys-Gly) (interchain with G-Cter in SUMO2); alternate). Disordered regions lie at residues 178 to 201 (LFPY…PAHL) and 217 to 291 (TMHL…RRER). Pro residues-rich tracts occupy residues 181-199 (YQPP…PPPA) and 224-238 (HPTP…PHPA). A required to functionally cooperate with SREBF1 in promoter activation region spans residues 182–198 (QPPPPPPPSHPHPHPPP). Ser-190 bears the Phosphoserine mark. A phosphothreonine; by GSK3 mark is found at Thr-226 and Thr-230. Ser-234 carries the phosphoserine; by GSK3 modification. The segment covering 239 to 259 (PALGAAGLPGPGSALKGLGAA) has biased composition (low complexity). The interval 244 to 358 (AGLPGPGSAL…SLVKAMGNCA (115 aa)) is interaction with FOXO1. The segment covering 276–291 (KSVDKNSNEYRVRRER) has biased composition (basic and acidic residues). Residues 282-345 (SNEYRVRRER…DTLRGIFRQL (64 aa)) form the bZIP domain. Residues 285–300 (YRVRRERNNIAVRKSR) mediate DNA binding. Positions 286 to 313 (RVRRERNNIAVRKSRDKAKQRNVETQQK) are basic motif. Residues 317 to 345 (LTSDNDRLRKRVEQLSRELDTLRGIFRQL) form a leucine-zipper region.

Belongs to the bZIP family. C/EBP subfamily. Binds DNA as a homodimer and as a heterodimer. Can form stable heterodimers with CEBPB, CEBPD, CEBPE and CEBPG. Interacts with PRDM16. Interacts with UBN1. Interacts with ZNF638; this interaction increases transcriptional activation. Interacts with the complex TFDP2:E2F1; the interaction prevents CEBPA binding to target gene promoters and represses its transcriptional activity. Interacts with RB1. Interacts (when phosphorylated at Ser-190) with CDK2, CDK4, E2F4 and SMARCA2. Interacts with SREBPF1. Interacts with FOXO1 (via the Fork-head domain); the interaction increases when FOXO1 is deacetylated. Interacts with SIX1. Interacts (via recognition sequence) with TRIB1. Interacts (via bZIP domain) with OVOL2 (via zinc-finger domains); the interaction inhibits the transcription factor activity of CEBPA and is required to repress adipogenesis. As to quaternary structure, interacts with TAF1A and UBTF. In terms of assembly, interacts with TAF1A and UBTF. Interacts with NPM1. (Microbial infection) Interacts with HBV protein X. As to quaternary structure, (Microbial infection) Interacts with Epstein-Barr virus lytic switch protein BZLF1; this interaction induces G1 cell cycle arrest. Phosphorylation at Ser-190 is required for interaction with CDK2, CDK4 and SWI/SNF complex leading to cell cycle inhibition. Dephosphorylated at Ser-190 by protein phosphatase 2A (PP2A) through PI3K/AKT signaling pathway regulation. Phosphorylation at Thr-226 and Thr-230 by GSK3 is constitutive in adipose tissue and lung. In liver, both Thr-226 and Thr-230 are phosphorylated only during feeding but not during fasting. Phosphorylation of the GSK3 consensus sites selectively decreases transactivation activity on IRE-controlled promoters. In terms of processing, sumoylated, sumoylation blocks the inhibitory effect on cell proliferation by disrupting the interaction with SMARCA2. Post-translationally, ubiquitinated by COP1 upon interaction with TRIB1.

The protein localises to the nucleus. The protein resides in the nucleolus. Its function is as follows. Transcription factor that coordinates proliferation arrest and the differentiation of myeloid progenitors, adipocytes, hepatocytes, and cells of the lung and the placenta. Binds directly to the consensus DNA sequence 5'-T[TG]NNGNAA[TG]-3' acting as an activator on distinct target genes. During early embryogenesis, plays essential and redundant functions with CEBPB. Essential for the transition from common myeloid progenitors (CMP) to granulocyte/monocyte progenitors (GMP). Critical for the proper development of the liver and the lung. Necessary for terminal adipocyte differentiation, is required for postnatal maintenance of systemic energy homeostasis and lipid storage. To regulate these different processes at the proper moment and tissue, interplays with other transcription factors and modulators. Down-regulates the expression of genes that maintain cells in an undifferentiated and proliferative state through E2F1 repression, which is critical for its ability to induce adipocyte and granulocyte terminal differentiation. Reciprocally E2F1 blocks adipocyte differentiation by binding to specific promoters and repressing CEBPA binding to its target gene promoters. Proliferation arrest also depends on a functional binding to SWI/SNF complex. In liver, regulates gluconeogenesis and lipogenesis through different mechanisms. To regulate gluconeogenesis, functionally cooperates with FOXO1 binding to IRE-controlled promoters and regulating the expression of target genes such as PCK1 or G6PC1. To modulate lipogenesis, interacts and transcriptionally synergizes with SREBF1 in promoter activation of specific lipogenic target genes such as ACAS2. In adipose tissue, seems to act as FOXO1 coactivator accessing to ADIPOQ promoter through FOXO1 binding sites. Functionally, can act as dominant-negative. Binds DNA and have transctivation activity, even if much less efficiently than isoform 2. Does not inhibit cell proliferation. Directly and specifically enhances ribosomal DNA transcription interacting with RNA polymerase I-specific cofactors and inducing histone acetylation. This is CCAAT/enhancer-binding protein alpha from Homo sapiens (Human).